The chain runs to 194 residues: Oligoribonuclease (194 aa).

In terms of domain architecture, Exonuclease spans 11–174 (LIWIDLEMTG…SDVRDSIDEL (164 aa)). Tyr132 is an active-site residue.

It belongs to the oligoribonuclease family.

It is found in the cytoplasm. In terms of biological role, 3'-to-5' exoribonuclease specific for small oligoribonucleotides. The protein is Oligoribonuclease of Xanthomonas axonopodis pv. citri (strain 306).